Reading from the N-terminus, the 280-residue chain is Golgi phosphoprotein 3-like A (280 aa).

The segment at 1–32 (MTTLIRRGRRAEEGQERRADSEDSIKDKDEEE) is disordered. The segment covering 10-32 (RAEEGQERRADSEDSIKDKDEEE) has biased composition (basic and acidic residues). Residues Trp62, Arg71, Arg152, and Arg155 each contribute to the a 1,2-diacyl-sn-glycero-3-phospho-(1D-myo-inositol 4-phosphate) site. The interval 171 to 182 (EKQNFLLFDMTT) is beta-hairpin required for oligomerization.

This sequence belongs to the GOLPH3/VPS74 family. In terms of assembly, homooligomer.

It is found in the golgi apparatus. The protein localises to the golgi stack membrane. The protein resides in the trans-Golgi network membrane. Functionally, phosphatidylinositol-4-phosphate-binding protein that may play a role in the process of vesicle budding at the Golgi and anterograde transport to the plasma membrane. The chain is Golgi phosphoprotein 3-like A (golph3l-a) from Xenopus laevis (African clawed frog).